Reading from the N-terminus, the 101-residue chain is Urease subunit beta (101 aa).

Belongs to the urease beta subunit family. As to quaternary structure, heterotrimer of UreA (gamma), UreB (beta) and UreC (alpha) subunits. Three heterotrimers associate to form the active enzyme.

It localises to the cytoplasm. It carries out the reaction urea + 2 H2O + H(+) = hydrogencarbonate + 2 NH4(+). Its pathway is nitrogen metabolism; urea degradation; CO(2) and NH(3) from urea (urease route): step 1/1. The chain is Urease subunit beta from Burkholderia orbicola (strain AU 1054).